The following is a 1077-amino-acid chain: Endo-1,4-beta-xylanase Y (1077 aa).

The first 26 residues, 1–26 (MKNKRVLAKITALVVLLGVFFVLPSN), serve as a signal peptide directing secretion. Residues 33–180 (DYEVVHDTFE…IFDDVTITRK (148 aa)) form the CBM-cenC 1 domain. A GH10 domain is found at 189–538 (YAANAVLKDM…KPAYNAVASI (350 aa)). The Proton donor role is filled by glutamate 337. Glutamate 460 serves as the catalytic Nucleophile. Residues 543–563 (EWGDGNNPAGGGGGGKPEEPD) form a disordered region. In terms of domain architecture, CBM-cenC 2 spans 565-714 (NGYYYHDTFE…YIDEAIGAVA (150 aa)). A Dockerin domain is found at 728 to 796 (PPVLLGDVNG…LLRVIDKFPV (69 aa)).

It belongs to the glycosyl hydrolase 10 (cellulase F) family.

The catalysed reaction is Endohydrolysis of (1-&gt;4)-beta-D-xylosidic linkages in xylans.. This chain is Endo-1,4-beta-xylanase Y (xynY), found in Acetivibrio thermocellus (Hungateiclostridium thermocellum).